We begin with the raw amino-acid sequence, 305 residues long: Aspartate carbamoyltransferase catalytic subunit (305 aa).

Carbamoyl phosphate-binding residues include R56 and T57. Residue K85 participates in L-aspartate binding. The carbamoyl phosphate site is built by R106, H134, and Q137. Residues R167 and R227 each contribute to the L-aspartate site. The carbamoyl phosphate site is built by L266 and P267.

Belongs to the aspartate/ornithine carbamoyltransferase superfamily. ATCase family. As to quaternary structure, heterooligomer of catalytic and regulatory chains.

The catalysed reaction is carbamoyl phosphate + L-aspartate = N-carbamoyl-L-aspartate + phosphate + H(+). Its pathway is pyrimidine metabolism; UMP biosynthesis via de novo pathway; (S)-dihydroorotate from bicarbonate: step 2/3. Catalyzes the condensation of carbamoyl phosphate and aspartate to form carbamoyl aspartate and inorganic phosphate, the committed step in the de novo pyrimidine nucleotide biosynthesis pathway. The chain is Aspartate carbamoyltransferase catalytic subunit from Thermoplasma acidophilum (strain ATCC 25905 / DSM 1728 / JCM 9062 / NBRC 15155 / AMRC-C165).